The chain runs to 139 residues: Peptide methionine sulfoxide reductase MsrB (139 aa).

The region spanning 17 to 139 (EEQWRRELSP…NSAALKLEPK (123 aa)) is the MsrB domain. Residues Cys-56, Cys-59, Cys-105, and Cys-108 each contribute to the Zn(2+) site. Residue Cys-128 is the Nucleophile of the active site.

Belongs to the MsrB Met sulfoxide reductase family. The cofactor is Zn(2+).

It carries out the reaction L-methionyl-[protein] + [thioredoxin]-disulfide + H2O = L-methionyl-(R)-S-oxide-[protein] + [thioredoxin]-dithiol. This is Peptide methionine sulfoxide reductase MsrB from Bradyrhizobium diazoefficiens (strain JCM 10833 / BCRC 13528 / IAM 13628 / NBRC 14792 / USDA 110).